Reading from the N-terminus, the 330-residue chain is Ketol-acid reductoisomerase (NADP(+)) (330 aa).

A KARI N-terminal Rossmann domain is found at 3–184 (LSVYYDKDID…GGGRMGVLET (182 aa)). Residues 26–29 (YGTQ), Ser52, and Ser54 contribute to the NADP(+) site. His109 is an active-site residue. Gly135 contributes to the NADP(+) binding site. The 145-residue stretch at 185-329 (SFKEECESDL…EILRTPFNHE (145 aa)) folds into the KARI C-terminal knotted domain. Mg(2+) is bound by residues Asp193, Glu197, Glu229, and Glu233. Residue Ser254 coordinates substrate.

This sequence belongs to the ketol-acid reductoisomerase family. Mg(2+) is required as a cofactor.

The enzyme catalyses (2R)-2,3-dihydroxy-3-methylbutanoate + NADP(+) = (2S)-2-acetolactate + NADPH + H(+). It catalyses the reaction (2R,3R)-2,3-dihydroxy-3-methylpentanoate + NADP(+) = (S)-2-ethyl-2-hydroxy-3-oxobutanoate + NADPH + H(+). It participates in amino-acid biosynthesis; L-isoleucine biosynthesis; L-isoleucine from 2-oxobutanoate: step 2/4. It functions in the pathway amino-acid biosynthesis; L-valine biosynthesis; L-valine from pyruvate: step 2/4. In terms of biological role, involved in the biosynthesis of branched-chain amino acids (BCAA). Catalyzes an alkyl-migration followed by a ketol-acid reduction of (S)-2-acetolactate (S2AL) to yield (R)-2,3-dihydroxy-isovalerate. In the isomerase reaction, S2AL is rearranged via a Mg-dependent methyl migration to produce 3-hydroxy-3-methyl-2-ketobutyrate (HMKB). In the reductase reaction, this 2-ketoacid undergoes a metal-dependent reduction by NADPH to yield (R)-2,3-dihydroxy-isovalerate. In Helicobacter acinonychis (strain Sheeba), this protein is Ketol-acid reductoisomerase (NADP(+)).